Reading from the N-terminus, the 148-residue chain is SsrA-binding protein (148 aa).

A compositionally biased stretch (basic and acidic residues) spans 127–142 (KRESEKERDWERDKAR). Residues 127–148 (KRESEKERDWERDKARLMRVKT) form a disordered region.

It belongs to the SmpB family.

It localises to the cytoplasm. Functionally, required for rescue of stalled ribosomes mediated by trans-translation. Binds to transfer-messenger RNA (tmRNA), required for stable association of tmRNA with ribosomes. tmRNA and SmpB together mimic tRNA shape, replacing the anticodon stem-loop with SmpB. tmRNA is encoded by the ssrA gene; the 2 termini fold to resemble tRNA(Ala) and it encodes a 'tag peptide', a short internal open reading frame. During trans-translation Ala-aminoacylated tmRNA acts like a tRNA, entering the A-site of stalled ribosomes, displacing the stalled mRNA. The ribosome then switches to translate the ORF on the tmRNA; the nascent peptide is terminated with the 'tag peptide' encoded by the tmRNA and targeted for degradation. The ribosome is freed to recommence translation, which seems to be the essential function of trans-translation. This Aromatoleum aromaticum (strain DSM 19018 / LMG 30748 / EbN1) (Azoarcus sp. (strain EbN1)) protein is SsrA-binding protein.